Consider the following 301-residue polypeptide: NDP-polyphosphate phosphotransferase 3 (301 aa).

Positions 1–12 (MNRNGSTKDPRR) are enriched in basic and acidic residues. The interval 1–21 (MNRNGSTKDPRRMTGAATGEI) is disordered.

The protein belongs to the polyphosphate kinase 2 (PPK2) family. Class I subfamily. It depends on Mg(2+) as a cofactor.

It carries out the reaction [phosphate](n) + ATP = [phosphate](n+1) + ADP. It catalyses the reaction [phosphate](n) + CTP = [phosphate](n+1) + CDP. The catalysed reaction is [phosphate](n) + GTP = [phosphate](n+1) + GDP. The enzyme catalyses [phosphate](n) + UTP = [phosphate](n+1) + UDP. Uses inorganic polyphosphate (polyP) as a donor to convert NDP to NTP. PolyP hydrolysis is slightly faster with UDP, but it can also use ADP, GDP and CDP. The protein is NDP-polyphosphate phosphotransferase 3 of Ruegeria pomeroyi (strain ATCC 700808 / DSM 15171 / DSS-3) (Silicibacter pomeroyi).